We begin with the raw amino-acid sequence, 358 residues long: Peptide chain release factor 1 (358 aa).

Residue glutamine 233 is modified to N5-methylglutamine.

It belongs to the prokaryotic/mitochondrial release factor family. Post-translationally, methylated by PrmC. Methylation increases the termination efficiency of RF1.

The protein localises to the cytoplasm. Peptide chain release factor 1 directs the termination of translation in response to the peptide chain termination codons UAG and UAA. In Beijerinckia indica subsp. indica (strain ATCC 9039 / DSM 1715 / NCIMB 8712), this protein is Peptide chain release factor 1.